The following is a 376-amino-acid chain: Glucose-1-phosphate adenylyltransferase (376 aa).

Alpha-D-glucose 1-phosphate contacts are provided by residues Tyr-101, Gly-166, 181–182, and Ser-192; that span reads EK.

This sequence belongs to the bacterial/plant glucose-1-phosphate adenylyltransferase family. Homotetramer.

It carries out the reaction alpha-D-glucose 1-phosphate + ATP + H(+) = ADP-alpha-D-glucose + diphosphate. The protein operates within glycan biosynthesis; glycogen biosynthesis. Its function is as follows. Involved in the biosynthesis of ADP-glucose, a building block required for the elongation reactions to produce glycogen. Catalyzes the reaction between ATP and alpha-D-glucose 1-phosphate (G1P) to produce pyrophosphate and ADP-Glc. The polypeptide is Glucose-1-phosphate adenylyltransferase (Bacillus mycoides (strain KBAB4) (Bacillus weihenstephanensis)).